A 160-amino-acid chain; its full sequence is SsrA-binding protein (160 aa).

This sequence belongs to the SmpB family.

Its subcellular location is the cytoplasm. Its function is as follows. Required for rescue of stalled ribosomes mediated by trans-translation. Binds to transfer-messenger RNA (tmRNA), required for stable association of tmRNA with ribosomes. tmRNA and SmpB together mimic tRNA shape, replacing the anticodon stem-loop with SmpB. tmRNA is encoded by the ssrA gene; the 2 termini fold to resemble tRNA(Ala) and it encodes a 'tag peptide', a short internal open reading frame. During trans-translation Ala-aminoacylated tmRNA acts like a tRNA, entering the A-site of stalled ribosomes, displacing the stalled mRNA. The ribosome then switches to translate the ORF on the tmRNA; the nascent peptide is terminated with the 'tag peptide' encoded by the tmRNA and targeted for degradation. The ribosome is freed to recommence translation, which seems to be the essential function of trans-translation. The chain is SsrA-binding protein from Escherichia coli O139:H28 (strain E24377A / ETEC).